The sequence spans 143 residues: Large ribosomal subunit protein uL11 (143 aa).

This sequence belongs to the universal ribosomal protein uL11 family. As to quaternary structure, part of the ribosomal stalk of the 50S ribosomal subunit. Interacts with L10 and the large rRNA to form the base of the stalk. L10 forms an elongated spine to which L12 dimers bind in a sequential fashion forming a multimeric L10(L12)X complex. Post-translationally, one or more lysine residues are methylated.

In terms of biological role, forms part of the ribosomal stalk which helps the ribosome interact with GTP-bound translation factors. The sequence is that of Large ribosomal subunit protein uL11 from Verminephrobacter eiseniae (strain EF01-2).